Here is a 330-residue protein sequence, read N- to C-terminus: MQGSVTEFLKPRLVDIEQINTTHAKVTLEPLERGFGHTLGNALRRILLSSMPGCAVTEVEIEGVLHEYSTKEGVQEDILEILLNLKGLAVRVAEGKDEVFITLNKSGSGPVVAGDITHDGDVEIANPEHVICHLTDDNAEIAMRIKVERGRGYVPASARIHTEEDERPIGRLLVDATYSPVDKIAYAVEAARVEQRTDLDKLVIDMETNGTLEPEEAIRRAATILAEQLDAFVDLRDVRVPEEKEEKPEFDPILLRPVDDLELTVRSANCLKAEAIHYIGDLVQRTEVELLKTPNLGKKSLTEIKDVLASRGLSLGMRLENWPPASIAED.

The tract at residues 1–236 (MQGSVTEFLK…EQLDAFVDLR (236 aa)) is alpha N-terminal domain (alpha-NTD). Positions 250 to 330 (FDPILLRPVD…NWPPASIAED (81 aa)) are alpha C-terminal domain (alpha-CTD).

The protein belongs to the RNA polymerase alpha chain family. In terms of assembly, homodimer. The RNAP catalytic core consists of 2 alpha, 1 beta, 1 beta' and 1 omega subunit. When a sigma factor is associated with the core the holoenzyme is formed, which can initiate transcription.

The enzyme catalyses RNA(n) + a ribonucleoside 5'-triphosphate = RNA(n+1) + diphosphate. Its function is as follows. DNA-dependent RNA polymerase catalyzes the transcription of DNA into RNA using the four ribonucleoside triphosphates as substrates. The sequence is that of DNA-directed RNA polymerase subunit alpha from Vibrio atlanticus (strain LGP32) (Vibrio splendidus (strain Mel32)).